The sequence spans 350 residues: Nicotinate-nucleotide--dimethylbenzimidazole phosphoribosyltransferase (350 aa).

The active-site Proton acceptor is glutamate 317.

It belongs to the CobT family.

The catalysed reaction is 5,6-dimethylbenzimidazole + nicotinate beta-D-ribonucleotide = alpha-ribazole 5'-phosphate + nicotinate + H(+). It participates in nucleoside biosynthesis; alpha-ribazole biosynthesis; alpha-ribazole from 5,6-dimethylbenzimidazole: step 1/2. Catalyzes the synthesis of alpha-ribazole-5'-phosphate from nicotinate mononucleotide (NAMN) and 5,6-dimethylbenzimidazole (DMB). The sequence is that of Nicotinate-nucleotide--dimethylbenzimidazole phosphoribosyltransferase from Shewanella sp. (strain ANA-3).